The following is a 223-amino-acid chain: Endo-1,4-beta-xylanase 2 (223 aa).

The first 19 residues, 1–19, serve as a signal peptide directing secretion; the sequence is MVSFTSLLAGVAAISGVLA. Positions 20 to 33 are excised as a propeptide; that stretch reads APAAEVESVAVEKR. At Gln34 the chain carries Pyrrolidone carboxylic acid. The 189-residue stretch at 34–222 folds into the GH11 domain; it reads QTIQPGTGYN…FSSGSASITV (189 aa). Residues Asn71 and Asn94 are each glycosylated (N-linked (GlcNAc...) asparagine). Substrate-binding residues include Tyr106 and Tyr110. The active-site Nucleophile is Glu119. Tyr121, Arg155, Pro159, Gln169, and Tyr204 together coordinate substrate. Glu210 acts as the Proton donor in catalysis.

This sequence belongs to the glycosyl hydrolase 11 (cellulase G) family.

It is found in the secreted. It carries out the reaction Endohydrolysis of (1-&gt;4)-beta-D-xylosidic linkages in xylans.. Its pathway is glycan degradation; xylan degradation. In terms of biological role, glycoside hydrolase involved in the hydrolysis of xylan, a major plant cell wall hemicellulose made up of 1,4-beta-linked D-xylopyranose residues. Catalyzes the endohydrolysis of the main-chain 1,4-beta-glycosidic bonds connecting the xylose subunits yielding various xylooligosaccharides and xylose. The catalysis proceeds by a double-displacement reaction mechanism with a putative covalent glycosyl-enzyme intermediate, with retention of the anomeric configuration. Produces xylobiose and xylose as the main degradation products. This chain is Endo-1,4-beta-xylanase 2, found in Hypocrea jecorina (strain ATCC 56765 / BCRC 32924 / NRRL 11460 / Rut C-30) (Trichoderma reesei).